The chain runs to 501 residues: Spore development regulator VOSA (501 aa).

3 disordered regions span residues 26–55 (GQFGDPNLTPPQAETQMSAQASAQAVGQEP), 67–88 (PQRARVAQGKEKGTDRKPIDPP), and 228–274 (AMTT…DTRG). Over residues 35 to 50 (PPQAETQMSAQASAQA) the composition is skewed to polar residues. Positions 52–223 (GQEPEPDYKL…SDQGVRLRVR (172 aa)) constitute a Velvet domain. Composition is skewed to basic and acidic residues over residues 67–85 (PQRARVAQGKEKGTDRKPI) and 237–252 (QHAEVAKKHSEWDRKQ). Polar residues predominate over residues 253 to 271 (TSAVSRHSSINENDSTPTD). The Nuclear localization signal motif lies at 364–371 (MSSHHGYT). Disordered stretches follow at residues 378–455 (FAPH…QQTP) and 474–501 (PGQLVGTSAPSPHLGQGYRHGMINEPGA).

This sequence belongs to the velvet family. VosA subfamily. Forms a heterodimeric complex with VELB; the formation of the VELB-VOSA complex is light-dependent.

Its subcellular location is the nucleus. Its function is as follows. Component of the VELB-VOSA heterodimeric complex that plays a dual role in activating genes associated with spore maturation and repressing certain development-associated genes. The complex binds DNA through the DNA-binding domain of VOSA that recognizes an 11-nucleotide consensus sequence 5'-CTGGCCGCGGC-3' consisting of two motifs in the promoters of key developmental regulatory genes. Appears dispensable for the development and pathogenicity. This is Spore development regulator VOSA from Pyricularia oryzae (strain 70-15 / ATCC MYA-4617 / FGSC 8958) (Rice blast fungus).